We begin with the raw amino-acid sequence, 183 residues long: Endoribonuclease AbiQ (183 aa).

It belongs to the ToxN/AbiQ toxin family. In terms of assembly, forms a triangular heterohexamer with a single 35-nt-long repeat of RNA antitoxin AntiQ.

It localises to the cytoplasm. In terms of biological role, toxic component of a type III toxin-antitoxin (TA) system. An endoribonuclease that is probably sequence-specific. It is neutralized by its cognate antitoxin RNA AntiQ, which has 2.8 35 nucleotide-long repeats. Cannot be cloned in L.lactis subsp. cremoris strain NZ9000 in the absence of the antitoxin gene; expression in strain NZ9000 even in the presence of antiQ inhibits growth in a bacteriostatic fashion. Confers resistance to 936 and c2 phages but not P335 phages in L.lactis, causes an abortive infection (Abi phenotype). Viral DNA is replicated but not cleaved from its concatemeric form, while the viral major structural protein is produced normally in the presence of this protein. Operon expression in E.coli confers resistance to 3 phages of the Myoviridae family (T4, RB69 and phage 2) and 1 of the Siphoviridae family (T5), but not other tested phages (T1, T3, lambda vir, HK97, Mu and pilH alpha). The presence of this operon in L.lactis subsp. lactis strain IL1403 during phage P008 infection alters the viral transcription profiles. In Lactococcus lactis subsp. lactis (Streptococcus lactis), this protein is Endoribonuclease AbiQ.